Consider the following 505-residue polypeptide: Catalase (505 aa).

Residues histidine 56 and asparagine 129 contribute to the active site. Tyrosine 339 contributes to the heme binding site.

This sequence belongs to the catalase family. Heme is required as a cofactor.

It is found in the cytoplasm. The enzyme catalyses 2 H2O2 = O2 + 2 H2O. In terms of biological role, decomposes hydrogen peroxide into water and oxygen; serves to protect cells from the toxic effects of hydrogen peroxide. This Helicobacter pylori (strain ATCC 700392 / 26695) (Campylobacter pylori) protein is Catalase (katA).